The primary structure comprises 189 residues: Glycerol-3-phosphate acyltransferase (189 aa).

The next 4 helical transmembrane spans lie at 1–21 (MFWL…AIVL), 77–97 (LQEQ…PVYF), 111–131 (MLMG…LLTF), and 151–171 (LLAW…VMIV).

It belongs to the PlsY family. In terms of assembly, probably interacts with PlsX.

Its subcellular location is the cell inner membrane. It catalyses the reaction an acyl phosphate + sn-glycerol 3-phosphate = a 1-acyl-sn-glycero-3-phosphate + phosphate. It functions in the pathway lipid metabolism; phospholipid metabolism. Its function is as follows. Catalyzes the transfer of an acyl group from acyl-phosphate (acyl-PO(4)) to glycerol-3-phosphate (G3P) to form lysophosphatidic acid (LPA). This enzyme utilizes acyl-phosphate as fatty acyl donor, but not acyl-CoA or acyl-ACP. This Pseudomonas putida (strain W619) protein is Glycerol-3-phosphate acyltransferase.